We begin with the raw amino-acid sequence, 104 residues long: V-type ATP synthase subunit F (104 aa).

The protein belongs to the V-ATPase F subunit family.

Its function is as follows. Produces ATP from ADP in the presence of a proton gradient across the membrane. This chain is V-type ATP synthase subunit F, found in Thermus thermophilus (strain ATCC BAA-163 / DSM 7039 / HB27).